The following is a 316-amino-acid chain: MGMGMRRERDAEAELNLPPGFRFHPTDDELVEHYLCRKAAGQRLPVPIIAEVDLYKFDPWDLPERALFGAREWYFFTPRDRKYPNGSRPNRAAGNGYWKATGADKPVAPRGRTLGIKKALVFYAGKAPRGVKTDWIMHEYRLADAGRAAAGAKKGSLRLDDWVLCRLYNKKNEWEKMQQGKEVKEEASDMVTSQSHSHTHSWGETRTPESEIVDNDPFPELDSFPAFQPAPPPATAMMVPKKESMDDATAAAAAAATIPRNNSSLFVDLSYDDIQGMYSGLDMLPPGDDFYSSLFASPRVKGTTPRAGAGMGMVPF.

The 154-residue stretch at 17–170 folds into the NAC domain; it reads LPPGFRFHPT…DWVLCRLYNK (154 aa). Residues 114 to 176 mediate DNA binding; the sequence is LGIKKALVFY…LYNKKNEWEK (63 aa). Positions 185-210 are disordered; that stretch reads EEASDMVTSQSHSHTHSWGETRTPES. The segment covering 190-200 has biased composition (polar residues); that stretch reads MVTSQSHSHTH.

As to quaternary structure, forms homodimer. Interacts with NAC071. As to expression, expressed in roots and stamens.

The protein localises to the nucleus. Functionally, transcription factor that possesses transactivation activity. Transcription activator involved in response to abiotic stresses. Plays a positive role during dehydration and salt stress. Binds specifically to the 5'-CATGTG-3' motif found in promoters of stress-responsive genes. This is NAC domain-containing protein 2 from Oryza sativa subsp. japonica (Rice).